The following is a 185-amino-acid chain: Large ribosomal subunit protein uL10 (185 aa).

A disordered region spans residues 165–185 (LRAKKEEQGGAGTPAPAEAAE).

Belongs to the universal ribosomal protein uL10 family. In terms of assembly, part of the ribosomal stalk of the 50S ribosomal subunit. The N-terminus interacts with L11 and the large rRNA to form the base of the stalk. The C-terminus forms an elongated spine to which L12 dimers bind in a sequential fashion forming a multimeric L10(L12)X complex.

Forms part of the ribosomal stalk, playing a central role in the interaction of the ribosome with GTP-bound translation factors. The protein is Large ribosomal subunit protein uL10 of Streptomyces griseus subsp. griseus (strain JCM 4626 / CBS 651.72 / NBRC 13350 / KCC S-0626 / ISP 5235).